The following is a 181-amino-acid chain: Regulator of G-protein signaling 5 (181 aa).

Residues 64 to 180 form the RGS domain; the sequence is SLDKLLQSNY…VRSEFYKELI (117 aa).

It is found in the cytoplasm. The protein resides in the membrane. Its function is as follows. Inhibits signal transduction by increasing the GTPase activity of G protein alpha subunits thereby driving them into their inactive GDP-bound form. Binds to G(i)-alpha and G(o)-alpha, but not to G(s)-alpha. This is Regulator of G-protein signaling 5 (Rgs5) from Rattus norvegicus (Rat).